Consider the following 585-residue polypeptide: Pyruvate kinase (585 aa).

Arg-32 provides a ligand contact to substrate. K(+) contacts are provided by Asn-34, Ser-36, Asp-66, and Thr-67. Position 34 to 37 (34 to 37 (NFSH)) interacts with ATP. ATP-binding residues include Arg-73 and Lys-156. A Mg(2+)-binding site is contributed by Glu-222. Residues Gly-245, Asp-246, and Thr-278 each coordinate substrate. Asp-246 contributes to the Mg(2+) binding site.

Belongs to the pyruvate kinase family. This sequence in the C-terminal section; belongs to the PEP-utilizing enzyme family. Homotetramer. It depends on Mg(2+) as a cofactor. K(+) is required as a cofactor.

The enzyme catalyses pyruvate + ATP = phosphoenolpyruvate + ADP + H(+). Its pathway is carbohydrate degradation; glycolysis; pyruvate from D-glyceraldehyde 3-phosphate: step 5/5. The polypeptide is Pyruvate kinase (pyk) (Bacillus licheniformis).